A 754-amino-acid polypeptide reads, in one-letter code: Endothelin-converting enzyme 1 (754 aa).

Over 1-52 (MMSTYKRATLDEEDLVDSLSEGEVYPNGLQVNFRNFRSSQRCWATRTQVEKR) the chain is Cytoplasmic. Thr-9 bears the Phosphothreonine mark. Residues 53 to 73 (LIVLVALLAAGLVACLTALGI) form a helical; Signal-anchor for type II membrane protein membrane-spanning segment. Over 74–754 (QYRTRTPPVC…MNPRHKCEVW (681 aa)) the chain is Extracellular. One can recognise a Peptidase M13 domain in the interval 82–754 (VCLSEACVSV…MNPRHKCEVW (673 aa)). 5 cysteine pairs are disulfide-bonded: Cys-83–Cys-88, Cys-106–Cys-739, Cys-114–Cys-699, Cys-169–Cys-419, and Cys-628–Cys-751. 8 N-linked (GlcNAc...) asparagine glycosylation sites follow: Asn-150, Asn-171, Asn-194, Asn-254, Asn-300, Asn-346, Asn-367, and Asn-523. Residue His-591 coordinates Zn(2+). The active site involves Glu-592. A Zn(2+)-binding site is contributed by His-595. 2 N-linked (GlcNAc...) asparagine glycosylation sites follow: Asn-616 and Asn-635. Glu-651 lines the Zn(2+) pocket. Asp-655 functions as the Proton donor in the catalytic mechanism.

This sequence belongs to the peptidase M13 family. Homodimer; disulfide-linked. Interacts with PPP1R16B. Interacts with TSPAN8; this interaction recruits the endothelin converting enzyme ECE1 to tetraspanin-enriched microdomains and positively modulates its enzymatic activity. The cofactor is Zn(2+).

It localises to the cell membrane. It carries out the reaction Hydrolysis of the 21-Trp-|-Val-22 bond in big endothelin to form endothelin 1.. Its activity is regulated as follows. Inhibited by phosphoramidon. Its function is as follows. Converts big endothelin-1 to endothelin-1. In Cavia porcellus (Guinea pig), this protein is Endothelin-converting enzyme 1 (ECE1).